We begin with the raw amino-acid sequence, 772 residues long: Hyperosmolality-gated Ca2+ permeable channel 1.1 (772 aa).

The Extracellular segment spans residues 1-5 (MATLK). Residues 6 to 28 (DIGVSAGINILTAFIFFIIFAFL) traverse the membrane as a helical segment. Residues 29–100 (RLQPFNDRVY…AGLDSVVYLR (72 aa)) lie on the Cytoplasmic side of the membrane. Residues 101 to 122 (IYWLGLKIFAPIAMLAWAVLVP) traverse the membrane as a helical segment. Over 123–159 (VNWTNNELELAKHFKNVTSSDIDKLTISNIPEGSNRF) the chain is Extracellular. An N-linked (GlcNAc) asparagine glycan is attached at asparagine 138. The chain crosses the membrane as a helical span at residues 160–180 (WAHIIMAYAFTIWTCYMLMKE). The Cytoplasmic portion of the chain corresponds to 181-372 (YETVANMRLQ…PNLAIPYVSL (192 aa)). A cytoplasmic region required for homodimerization region spans residues 339 to 344 (QTTQTR). A helical transmembrane segment spans residues 373 to 398 (TVRRLVMNVAFFFLTFFFIIPIAFVQ). Residues 399 to 424 (SLATIEGIEKVAPFLKVIIEKDFIKS) lie on the Extracellular side of the membrane. Residues 425–450 (LIQGLLAGIALKLFLIFLPAILMTMS) form a helical membrane-spanning segment. Residues 451-461 (KFEGFTSVSFL) are Cytoplasmic-facing. The helical transmembrane segment at 462–485 (ERRSASRYYIFNLVNVFLGSVIAG) threads the bilayer. Over 486 to 509 (AAFEQLNSFLNQSPNQIPKTIGMA) the chain is Extracellular. A helical transmembrane segment spans residues 510–538 (IPMKATFFITYIMVDGWAGVAGEILMLKP). Topologically, residues 539–566 (LIIYHLKNAFLVKTEKDREEAMNPGSIG) are cytoplasmic. Residues 567 to 587 (FNTGEPQIQLYFLLGLVYAPV) form a helical membrane-spanning segment. Threonine 588 is a topological domain (extracellular). The chain crosses the membrane as a helical span at residues 589 to 606 (PMLLPFILVFFALAYVVY). Topologically, residues 607–624 (RHQIINVYNQEYESAAAF) are cytoplasmic. Residues 625–647 (WPDVHGRVITALIISQLLLMGLL) traverse the membrane as a helical segment. Residues 648–653 (GTKHAA) are Extracellular-facing. The chain crosses the membrane as a helical span at residues 654–674 (SAAPFLIALPVITIGFHRFCK). Topologically, residues 675-772 (GRFEPAFVRY…SLAVINGKEV (98 aa)) are cytoplasmic. Residues 686–688 (LQE) are cytoplasmic region required for homodimerization. The interval 743–772 (KRQSRRNTPAPSRISGESSPSLAVINGKEV) is disordered. Residues 748-763 (RNTPAPSRISGESSPS) show a composition bias toward polar residues.

Belongs to the CSC1 (TC 1.A.17) family. As to quaternary structure, homodimer. Expressed in leaves, flowers, roots and guard cells.

It localises to the cell membrane. Activated by mechanical pressure. Functionally, acts as a hyperosmolarity-gated non-selective cation channel that permeates Ca(2+) ions. Shows the following permeability sequence: K(+) &gt; Ba(2+) = Ca(2+) &gt; Na(+) = Mg(2+) = Cs(+). Mechanosensitive ion channel that converts mechanical stimuli into a flow of ions: activated in response to membrane stretch and poke. In Arabidopsis thaliana (Mouse-ear cress), this protein is Hyperosmolality-gated Ca2+ permeable channel 1.1.